Here is a 470-residue protein sequence, read N- to C-terminus: uncharacterized protein (470 aa).

Residues Ser-439–Thr-470 form a disordered region. The span at Ser-443–Thr-463 shows a compositional bias: basic residues.

This is an uncharacterized protein from Acanthamoeba polyphaga mimivirus (APMV).